A 178-amino-acid chain; its full sequence is Large ribosomal subunit protein uL6 (178 aa).

This sequence belongs to the universal ribosomal protein uL6 family. Part of the 50S ribosomal subunit.

Functionally, this protein binds to the 23S rRNA, and is important in its secondary structure. It is located near the subunit interface in the base of the L7/L12 stalk, and near the tRNA binding site of the peptidyltransferase center. This is Large ribosomal subunit protein uL6 from Corynebacterium glutamicum (strain R).